The chain runs to 239 residues: MLAGLVPAPDHGMREEILGDRSRLIRQRGEHALIGISAGNSYFSQKNTVMLLQWAGQRFERTDVVYVDTHIDEMLIADGRSAQEAERSVKRTLKDLRRRLRRSLESVGDHAERFRVRSLSELQETPEYRAVRERTDRAFEEDAEFATACEDMVRAVVMNRPGDGVGISAEHLRAGLNYVLAEAPLFADSPGVFSVPSSVLCYHIDTPITAFLSRRETGFRAAEGQAYVVVRPQELADAA.

The active-site Nucleophile is Ser37. Residues Asn40, 178–182 (YVLAE), and Tyr202 contribute to the substrate site.

Belongs to the CDPS family. Monomer.

The catalysed reaction is L-phenylalanyl-tRNA(Phe) + L-leucyl-tRNA(Leu) = cyclo(L-phenylalanyl-L-leucyl) + tRNA(Phe) + tRNA(Leu) + H(+). Its function is as follows. Involved in the biosynthesis of albonoursin (cyclo[(alpha,beta-dehydro-Phe)-(alpha,beta-dehydro-Leu)]), an antibacterial peptide. It uses activated amino acids in the form of aminoacyl-tRNAs (aa-tRNAs) as substrates to catalyze the ATP-independent formation of cyclodipeptides which are intermediates in diketopiperazine (DKP) biosynthetic pathways. Catalyzes the formation of cyclo(L-Phe-L-Leu) (cFL) as major products from L-L-phenylalanyl-tRNA(Phe) and L-leucyl-tRNA(Leu). AlbC can also incorporate various nonpolar residues, such as L-phenylalanine, L-leucine, L-tyrosine and L-methionine, and to a much lesser extent L-alanine and L-valine, into cyclodipeptides. Indeed, ten possible cyclodipeptides composed of L-phenylalanine, L-leucine, L-tyrosine and L-methionine are all synthesized to detectable amounts by AlbC. This is Cyclo(L-leucyl-L-phenylalanyl) synthase (albC) from Streptomyces noursei (Streptomyces albulus).